The following is a 515-amino-acid chain: 2-isopropylmalate synthase (515 aa).

Residues 5-267 (VIIFDTTLRD…DTRINTQEIH (263 aa)) form the Pyruvate carboxyltransferase domain. The Mn(2+) site is built by Asp-14, His-202, His-204, and Asn-238. The segment at 392-515 (VLDKLSAHST…VADIKSHKHH (124 aa)) is regulatory domain.

Belongs to the alpha-IPM synthase/homocitrate synthase family. LeuA type 1 subfamily. Homodimer. It depends on Mn(2+) as a cofactor.

The protein resides in the cytoplasm. It catalyses the reaction 3-methyl-2-oxobutanoate + acetyl-CoA + H2O = (2S)-2-isopropylmalate + CoA + H(+). It functions in the pathway amino-acid biosynthesis; L-leucine biosynthesis; L-leucine from 3-methyl-2-oxobutanoate: step 1/4. Its function is as follows. Catalyzes the condensation of the acetyl group of acetyl-CoA with 3-methyl-2-oxobutanoate (2-ketoisovalerate) to form 3-carboxy-3-hydroxy-4-methylpentanoate (2-isopropylmalate). This is 2-isopropylmalate synthase from Haemophilus influenzae (strain 86-028NP).